The primary structure comprises 50 residues: Light-harvesting protein B-880 alpha chain (50 aa).

The Cytoplasmic segment spans residues 1-12; that stretch reads MYKLWLLFDPRR. Residues 13–33 traverse the membrane as a helical segment; that stretch reads ALVALSAFLFVLALIIHFIAL. H29 is a binding site for a bacteriochlorophyll. Residues 34–50 lie on the Periplasmic side of the membrane; sequence STDRFNWLEGKPAVKAA.

The protein belongs to the antenna complex alpha subunit family. As to quaternary structure, the core complex is formed by different alpha and beta chains, binding bacteriochlorophyll molecules, and arranged most probably in tetrameric structures disposed around the reaction center. The non-pigmented gamma chains may constitute additional components.

The protein resides in the cell inner membrane. Its function is as follows. Antenna complexes are light-harvesting systems, which transfer the excitation energy to the reaction centers. The sequence is that of Light-harvesting protein B-880 alpha chain from Rhodoblastus acidophilus (Rhodopseudomonas acidophila).